A 725-amino-acid polypeptide reads, in one-letter code: Ribosomal RNA large subunit methyltransferase K/L (725 aa).

Residues 45–156 (SGYRACLWSR…RGRLSLGIDL (112 aa)) enclose the THUMP domain.

It belongs to the methyltransferase superfamily. RlmKL family.

It localises to the cytoplasm. It catalyses the reaction guanosine(2445) in 23S rRNA + S-adenosyl-L-methionine = N(2)-methylguanosine(2445) in 23S rRNA + S-adenosyl-L-homocysteine + H(+). The catalysed reaction is guanosine(2069) in 23S rRNA + S-adenosyl-L-methionine = N(2)-methylguanosine(2069) in 23S rRNA + S-adenosyl-L-homocysteine + H(+). Functionally, specifically methylates the guanine in position 2445 (m2G2445) and the guanine in position 2069 (m7G2069) of 23S rRNA. The polypeptide is Ribosomal RNA large subunit methyltransferase K/L (Marinobacter nauticus (strain ATCC 700491 / DSM 11845 / VT8) (Marinobacter aquaeolei)).